The primary structure comprises 944 residues: Bifunctional uridylyltransferase/uridylyl-removing enzyme (944 aa).

Residues 1–371 (MRDLDFTNIL…RFTHRNRKIA (371 aa)) form a uridylyltransferase region. Residues 372-727 (GSVEFVEDRG…VRTDSFHAIT (356 aa)) are uridylyl-removing. Residues 488–604 (VDEHLIRTVD…TDFADRVQSL (117 aa)) form the HD domain. ACT domains follow at residues 728–809 (EITV…EVIA) and 839–918 (VIEV…LRER). Residues 911–944 (EEDELRERMPSGIIAPAATARTPPASEKKAGSPI) form a disordered region. Over residues 925 to 935 (APAATARTPPA) the composition is skewed to low complexity.

This sequence belongs to the GlnD family. Mg(2+) is required as a cofactor.

It carries out the reaction [protein-PII]-L-tyrosine + UTP = [protein-PII]-uridylyl-L-tyrosine + diphosphate. The enzyme catalyses [protein-PII]-uridylyl-L-tyrosine + H2O = [protein-PII]-L-tyrosine + UMP + H(+). Uridylyltransferase (UTase) activity is inhibited by glutamine, while glutamine likely activates uridylyl-removing (UR) activity. In terms of biological role, modifies, by uridylylation and deuridylylation, the PII regulatory proteins GlnB and GlnK, in response to the nitrogen status of the cell that GlnD senses through the glutamine level. Under low glutamine levels, catalyzes the conversion of the PII proteins and UTP to PII-UMP and PPi, while under higher glutamine levels, GlnD likely hydrolyzes PII-UMP to PII and UMP (deuridylylation). Thus, controls uridylylation state and activity of the PII proteins, and plays an important role in the regulation of nitrogen metabolism. The sequence is that of Bifunctional uridylyltransferase/uridylyl-removing enzyme from Rhizobium leguminosarum bv. viciae.